The sequence spans 469 residues: Glutamate--tRNA ligase (469 aa).

A 'HIGH' region motif is present at residues 9–19 (PSPTGFLHVGG). The short motif at 236 to 240 (KLSKR) is the 'KMSKS' region element. Lys-239 is a binding site for ATP.

Belongs to the class-I aminoacyl-tRNA synthetase family. Glutamate--tRNA ligase type 1 subfamily. Monomer.

It localises to the cytoplasm. It catalyses the reaction tRNA(Glu) + L-glutamate + ATP = L-glutamyl-tRNA(Glu) + AMP + diphosphate. In terms of biological role, catalyzes the attachment of glutamate to tRNA(Glu) in a two-step reaction: glutamate is first activated by ATP to form Glu-AMP and then transferred to the acceptor end of tRNA(Glu). The chain is Glutamate--tRNA ligase from Pseudoalteromonas atlantica (strain T6c / ATCC BAA-1087).